A 124-amino-acid chain; its full sequence is Small ribosomal subunit protein uS13 (124 aa).

Positions 99–124 (RGQRTRTNARTRKGPRKTVGVMRKKS) are disordered. The segment covering 101–124 (QRTRTNARTRKGPRKTVGVMRKKS) has biased composition (basic residues).

The protein belongs to the universal ribosomal protein uS13 family. As to quaternary structure, part of the 30S ribosomal subunit. Forms a loose heterodimer with protein S19. Forms two bridges to the 50S subunit in the 70S ribosome.

In terms of biological role, located at the top of the head of the 30S subunit, it contacts several helices of the 16S rRNA. In the 70S ribosome it contacts the 23S rRNA (bridge B1a) and protein L5 of the 50S subunit (bridge B1b), connecting the 2 subunits; these bridges are implicated in subunit movement. Contacts the tRNAs in the A and P-sites. The sequence is that of Small ribosomal subunit protein uS13 from Caldicellulosiruptor saccharolyticus (strain ATCC 43494 / DSM 8903 / Tp8T 6331).